The following is a 394-amino-acid chain: Ribulose bisphosphate carboxylase large chain (394 aa).

The residue at position 5 (K5) is an N6,N6,N6-trimethyllysine. Residues N114 and T164 each contribute to the substrate site. K166 acts as the Proton acceptor in catalysis. K168 is a substrate binding site. Positions 192, 194, and 195 each coordinate Mg(2+). N6-carboxylysine is present on K192. Residue H285 is the Proton acceptor of the active site. Residues R286, H318, and S370 each contribute to the substrate site.

This sequence belongs to the RuBisCO large chain family. Type I subfamily. In terms of assembly, heterohexadecamer of 8 large chains and 8 small chains. Requires Mg(2+) as cofactor.

The protein resides in the plastid. Its subcellular location is the chloroplast. It catalyses the reaction 2 (2R)-3-phosphoglycerate + 2 H(+) = D-ribulose 1,5-bisphosphate + CO2 + H2O. The catalysed reaction is D-ribulose 1,5-bisphosphate + O2 = 2-phosphoglycolate + (2R)-3-phosphoglycerate + 2 H(+). In terms of biological role, ruBisCO catalyzes two reactions: the carboxylation of D-ribulose 1,5-bisphosphate, the primary event in carbon dioxide fixation, as well as the oxidative fragmentation of the pentose substrate in the photorespiration process. Both reactions occur simultaneously and in competition at the same active site. The chain is Ribulose bisphosphate carboxylase large chain (rbcL) from Nymphaea odorata (White water lily).